The chain runs to 119 residues: uncharacterized protein (119 aa).

Residues 1–22 (MQGQAGKRKTDGKVPSNTEQNC) are disordered.

This is an uncharacterized protein from Saccharomyces cerevisiae (strain ATCC 204508 / S288c) (Baker's yeast).